The chain runs to 517 residues: Crotonobetaine/carnitine--CoA ligase (517 aa).

This sequence belongs to the ATP-dependent AMP-binding enzyme family.

The enzyme catalyses 4-(trimethylamino)butanoate + ATP + CoA = 4-(trimethylamino)butanoyl-CoA + AMP + diphosphate. It carries out the reaction crotonobetaine + ATP + CoA = crotonobetainyl-CoA + AMP + diphosphate. The catalysed reaction is (R)-carnitine + ATP + CoA = (R)-carnitinyl-CoA + AMP + diphosphate. The protein operates within amine and polyamine metabolism; carnitine metabolism. Its function is as follows. Catalyzes the transfer of CoA to carnitine, generating the initial carnitinyl-CoA needed for the CaiB reaction cycle. Also has activity toward crotonobetaine and gamma-butyrobetaine. This chain is Crotonobetaine/carnitine--CoA ligase, found in Salmonella arizonae (strain ATCC BAA-731 / CDC346-86 / RSK2980).